Here is a 433-residue protein sequence, read N- to C-terminus: Trigger factor (433 aa).

The PPIase FKBP-type domain maps to Gly-165 to Val-250.

It belongs to the FKBP-type PPIase family. Tig subfamily.

It is found in the cytoplasm. It catalyses the reaction [protein]-peptidylproline (omega=180) = [protein]-peptidylproline (omega=0). Its function is as follows. Involved in protein export. Acts as a chaperone by maintaining the newly synthesized protein in an open conformation. Functions as a peptidyl-prolyl cis-trans isomerase. This Sulfurimonas denitrificans (strain ATCC 33889 / DSM 1251) (Thiomicrospira denitrificans (strain ATCC 33889 / DSM 1251)) protein is Trigger factor.